The chain runs to 552 residues: Non-structural protein NS1 (552 aa).

Belongs to the orbivirus non-structural protein NS1 family.

The protein is Non-structural protein NS1 (Segment-5) of Bluetongue virus 13 (isolate USA) (BTV 13).